We begin with the raw amino-acid sequence, 269 residues long: Probable cysteine protease avirulence protein AvrPpiC2 (269 aa).

The segment at 1–39 (MTIVSGHIGKHPSLTTVQAGSSASVENQMPDPAQFSDGR) is disordered. The span at 13 to 27 (SLTTVQAGSSASVEN) shows a compositional bias: polar residues. Active-site residues include Cys-72, His-213, and Asp-230.

The protein belongs to the peptidase C58 family.

Potential cysteine protease. Avirulence protein, which may be essential during infection of plant cells from Pea and some Arabidopsis thaliana cultivars. May act by affecting the plant defense system. In plants lacking appropriate resistance (R) gene, it probably impairs the plant defense system and leads to the bacteria multiplication. In contrast, in plants containing the appropriate R protein, it is unable to induce disease symptoms, explaining its avirulence name. The sequence is that of Probable cysteine protease avirulence protein AvrPpiC2 (avrPpiC2) from Pseudomonas syringae pv. pisi.